The chain runs to 376 residues: Chaperone protein DnaJ (376 aa).

The J domain maps to 5-70; sequence DYYEVLGVGR…DKKAAYDQFG (66 aa). A CR-type zinc finger spans residues 132 to 210; it reads GLTKELRIPT…CHGEGRVEKS (79 aa). The Zn(2+) site is built by Cys-145, Cys-148, Cys-162, Cys-165, Cys-184, Cys-187, Cys-198, and Cys-201. 4 CXXCXGXG motif repeats span residues 145–152, 162–169, 184–191, and 198–205; these read CDLCDGSG, CGTCHGQG, CPTCHGRG, and CGKCHGEG.

It belongs to the DnaJ family. Homodimer. The cofactor is Zn(2+).

Its subcellular location is the cytoplasm. Participates actively in the response to hyperosmotic and heat shock by preventing the aggregation of stress-denatured proteins and by disaggregating proteins, also in an autonomous, DnaK-independent fashion. Unfolded proteins bind initially to DnaJ; upon interaction with the DnaJ-bound protein, DnaK hydrolyzes its bound ATP, resulting in the formation of a stable complex. GrpE releases ADP from DnaK; ATP binding to DnaK triggers the release of the substrate protein, thus completing the reaction cycle. Several rounds of ATP-dependent interactions between DnaJ, DnaK and GrpE are required for fully efficient folding. Also involved, together with DnaK and GrpE, in the DNA replication of plasmids through activation of initiation proteins. The polypeptide is Chaperone protein DnaJ (Shewanella frigidimarina (strain NCIMB 400)).